The primary structure comprises 714 residues: Protein artemis (714 aa).

Disordered regions lie at residues 391–500 (ELFD…ESNA), 516–577 (ESSE…TVLI), 598–617 (ALLSHDTPRDSQADDSRWKL), and 638–683 (EKDA…LTPD). A compositionally biased stretch (polar residues) spans 427–440 (NESTESYRANTAYT). Positions 447-468 (VDCEESNDDDDDDDDDDKEDDS) are enriched in acidic residues. Composition is skewed to polar residues over residues 484-500 (SIASCNGIPSNQQESNA) and 532-543 (GSQSLFSDSDGV). Positions 544-561 (SDSTHISSQNSSQSTHIS) are enriched in low complexity. Positions 562–577 (EQGSQGWDSQMDTVLI) are enriched in polar residues. Basic and acidic residues-rich tracts occupy residues 603–615 (DTPRDSQADDSRW) and 660–670 (RTPDLELKRDS). At serine 670 the chain carries Phosphoserine; by ATM.

This sequence belongs to the DNA repair metallo-beta-lactamase (DRMBL) family. Interacts with PRKDC. Post-translationally, phosphorylation on undefined residues by PRKDC may stimulate endonucleolytic activity on 5' and 3' hairpins and overhangs. PRKDC must remain present, even after phosphorylation, for efficient hairpin opening.

The protein resides in the nucleus. Its function is as follows. Required for V(D)J recombination, the process by which exons encoding the antigen-binding domains of immunoglobulins and T-cell receptor proteins are assembled from individual V, (D), and J gene segments. V(D)J recombination is initiated by the lymphoid specific RAG endonuclease complex, which generates site specific DNA double strand breaks (DSBs). These DSBs present two types of DNA end structures: hairpin sealed coding ends and phosphorylated blunt signal ends. These ends are independently repaired by the non homologous end joining (NHEJ) pathway to form coding and signal joints respectively. This protein exhibits single-strand specific 5'-3' exonuclease activity in isolation, and acquires endonucleolytic activity on 5' and 3' hairpins and overhangs when in a complex with PRKDC. The latter activity is required specifically for the resolution of closed hairpins prior to the formation of the coding joint. May also be required for the repair of complex DSBs induced by ionizing radiation, which require substantial end-processing prior to religation by NHEJ. The polypeptide is Protein artemis (DCLRE1C) (Gallus gallus (Chicken)).